The chain runs to 177 residues: 2-C-methyl-D-erythritol 2,4-cyclodiphosphate synthase (177 aa).

Residues D23 and H25 each coordinate a divalent metal cation. 4-CDP-2-C-methyl-D-erythritol 2-phosphate-binding positions include D23–H25 and H49–S50. Residue H57 coordinates a divalent metal cation. Residues D71–G73, F76–D80, A115–A121, and R157 each bind 4-CDP-2-C-methyl-D-erythritol 2-phosphate.

It belongs to the IspF family. In terms of assembly, homotrimer. A divalent metal cation serves as cofactor.

The catalysed reaction is 4-CDP-2-C-methyl-D-erythritol 2-phosphate = 2-C-methyl-D-erythritol 2,4-cyclic diphosphate + CMP. Its pathway is isoprenoid biosynthesis; isopentenyl diphosphate biosynthesis via DXP pathway; isopentenyl diphosphate from 1-deoxy-D-xylulose 5-phosphate: step 4/6. In terms of biological role, involved in the biosynthesis of isopentenyl diphosphate (IPP) and dimethylallyl diphosphate (DMAPP), two major building blocks of isoprenoid compounds. Catalyzes the conversion of 4-diphosphocytidyl-2-C-methyl-D-erythritol 2-phosphate (CDP-ME2P) to 2-C-methyl-D-erythritol 2,4-cyclodiphosphate (ME-CPP) with a corresponding release of cytidine 5-monophosphate (CMP). In Nitrosospira multiformis (strain ATCC 25196 / NCIMB 11849 / C 71), this protein is 2-C-methyl-D-erythritol 2,4-cyclodiphosphate synthase.